Consider the following 24-residue polypeptide: Brevinin-1E (24 aa).

An intrachain disulfide couples Cys-18 to Cys-24.

In terms of tissue distribution, expressed by the skin glands.

The protein resides in the secreted. In terms of biological role, antimicrobial peptide. Stimulates insulin release by BRIN-BD11 cells in vitro. In Pelophylax saharicus (Sahara frog), this protein is Brevinin-1E.